Consider the following 435-residue polypeptide: Mitochondrial association factor 1 form a1 (435 aa).

A signal peptide spans M1 to G20. The Vacuolar segment spans residues A21–R95. The interval G43 to T88 is disordered. Positions V55–E64 are enriched in basic and acidic residues. Residues R96–L116 traverse the membrane as a helical segment. Over R117–D435 the chain is Cytoplasmic. Residues R120–P162 form a disordered region. Low complexity predominate over residues P141–P153.

As to quaternary structure, interacts with host SAMM50.

It localises to the parasitophorous vacuole membrane. Functionally, during host cell infection by tachyzoites, does not play a role in tethering the parasitophorous vacuole to the host mitochondria, probably because it does not bind host mitochondrial import protein TOMM70. The sequence is that of Mitochondrial association factor 1 form a1 from Toxoplasma gondii.